The following is an 899-amino-acid chain: Origin recognition complex subunit 5 (899 aa).

Disordered regions lie at residues 27–47 (FSSP…NDDT), 100–166 (DRIN…EYKD), and 194–238 (KNLE…DGNL). Residues 105-160 (SEEETNINDDNNDDNNGDYDDDNNSDDDDDNDDNNNNDDNNNDDDEDVDDFEDIKE) are compositionally biased toward acidic residues. Residues 207-218 (SSDNSMTSSSEE) show a composition bias toward low complexity. Basic and acidic residues predominate over residues 227–237 (ESDKESDKDGN). Residue 303–310 (GLPGMGKT) participates in ATP binding. Residues 409 to 469 (KRTTENIRSP…NNNSNNVRFN (61 aa)) form a disordered region. Residues 455 to 469 (KNNFNNNNSNNVRFN) show a composition bias toward low complexity.

This sequence belongs to the ORC5 family. Component of the origin recognition complex (ORC). Interacts with PCNA1; the interaction occurs during the trophozoite stage but not at the late schizont stage.

Its subcellular location is the nucleus. The catalysed reaction is ATP + H2O = ADP + phosphate + H(+). Functionally, component of the origin recognition complex (ORC) that binds origins of replication. The polypeptide is Origin recognition complex subunit 5 (Plasmodium falciparum (isolate 3D7)).